Here is a 73-residue protein sequence, read N- to C-terminus: DNA gyrase inhibitor YacG (73 aa).

Cys-12, Cys-15, Cys-31, and Cys-35 together coordinate Zn(2+). The tract at residues 47–73 (DYAIPGEPIDPAEPSEDRNGAEGPPTD) is disordered.

This sequence belongs to the DNA gyrase inhibitor YacG family. As to quaternary structure, interacts with GyrB. Zn(2+) serves as cofactor.

In terms of biological role, inhibits all the catalytic activities of DNA gyrase by preventing its interaction with DNA. Acts by binding directly to the C-terminal domain of GyrB, which probably disrupts DNA binding by the gyrase. In Methylococcus capsulatus (strain ATCC 33009 / NCIMB 11132 / Bath), this protein is DNA gyrase inhibitor YacG.